The primary structure comprises 534 residues: Beta-1,2-xylosyltransferase (534 aa).

Residues 1-11 lie on the Cytoplasmic side of the membrane; the sequence is MSKRNPKILKI. Residues 12–34 form a helical; Signal-anchor for type II membrane protein membrane-spanning segment; sequence FLYMLLLNSLFLIIYFVFHSSSF. Residues 35–534 lie on the Lumenal side of the membrane; sequence SPEQSQPPHI…LTEIMKSLGC (500 aa). N51, N301, and N479 each carry an N-linked (GlcNAc...) asparagine glycan.

In terms of processing, glycosylation at least at one of the two sites Asn-51 and Asn-301 is necessary for enzyme stability and activity.

The protein localises to the golgi apparatus membrane. It catalyses the reaction N(4)-{beta-D-GlcNAc-(1-&gt;2)-alpha-D-Man-(1-&gt;3)-[beta-D-GlcNAc-(1-&gt;2)-alpha-D-Man-(1-&gt;6)]-beta-D-Man-(1-&gt;4)-beta-D-GlcNAc-(1-&gt;4)-beta-D-GlcNAc}-L-asparaginyl-[protein] + UDP-alpha-D-xylose = N(4)-{beta-D-GlcNAc-(1-&gt;2)-alpha-D-Man-(1-&gt;3)-[beta-D-GlcNAc-(1-&gt;2)-alpha-D-Man-(1-&gt;6)]-[beta-D-Xyl-(1-&gt;2)]-beta-D-Man-(1-&gt;4)-beta-D-GlcNAc-(1-&gt;4)-beta-D-GlcNAc}-L-asparaginyl-[protein] + UDP + H(+). It participates in protein modification; protein glycosylation. Functionally, glycosyltransferase involved in the xylosylation of N-glycans. Possesses beta-1,2-xylosyltransferase activity, transferring xylose from UDP-xylose to the core beta-linked mannose of N-glycans. Involved in the biosynthesis of glycoprotein bound N-glycans. Does not require metal ions for its activity. In Arabidopsis thaliana (Mouse-ear cress), this protein is Beta-1,2-xylosyltransferase.